The sequence spans 209 residues: Putative AgrB-like protein (209 aa).

5 helical membrane-spanning segments follow: residues 49-71 (ILFLVSYYFGLIKETIIMLAAFG), 82-102 (AKNSIVCTVMSLLMFVLGAYL), 105-125 (YLLFNNYMVLASFIIVNLLLF), 149-169 (QAVLMGMLLMAITLIIPDELI), and 173-193 (ISLSSYFEIISILPITYKVLG).

The protein belongs to the AgrB family.

It is found in the cell membrane. Functionally, may be involved in the proteolytic processing of a quorum sensing system signal molecule precursor. In Clostridium acetobutylicum (strain ATCC 824 / DSM 792 / JCM 1419 / IAM 19013 / LMG 5710 / NBRC 13948 / NRRL B-527 / VKM B-1787 / 2291 / W), this protein is Putative AgrB-like protein.